A 186-amino-acid chain; its full sequence is MKKLLLPALLTFSATPALAAKGPFFSLANTDFIVLISFIAFIGVLVYFKIPGILSGMLDKRAEGIKAELEEAKALREEAQTLLASYERKQREVQAQADAIVATAKEDAEAAAAQAKVDLEASIARRLATAEDQLASAQAAAIKEVKDKAVTVAIAAAADVISSKLGKAELNALNADAIKEVKAKLH.

The chain crosses the membrane as a helical span at residues 5-25; sequence LLPALLTFSATPALAAKGPFF.

Belongs to the ATPase B chain family. As to quaternary structure, F-type ATPases have 2 components, F(1) - the catalytic core - and F(0) - the membrane proton channel. F(1) has five subunits: alpha(3), beta(3), gamma(1), delta(1), epsilon(1). F(0) has three main subunits: a(1), b(2) and c(10-14). The alpha and beta chains form an alternating ring which encloses part of the gamma chain. F(1) is attached to F(0) by a central stalk formed by the gamma and epsilon chains, while a peripheral stalk is formed by the delta and b chains.

The protein resides in the cell inner membrane. Its function is as follows. F(1)F(0) ATP synthase produces ATP from ADP in the presence of a proton or sodium gradient. F-type ATPases consist of two structural domains, F(1) containing the extramembraneous catalytic core and F(0) containing the membrane proton channel, linked together by a central stalk and a peripheral stalk. During catalysis, ATP synthesis in the catalytic domain of F(1) is coupled via a rotary mechanism of the central stalk subunits to proton translocation. In terms of biological role, component of the F(0) channel, it forms part of the peripheral stalk, linking F(1) to F(0). The chain is ATP synthase subunit b 3 from Dinoroseobacter shibae (strain DSM 16493 / NCIMB 14021 / DFL 12).